A 282-amino-acid polypeptide reads, in one-letter code: Energy-coupling factor transporter ATP-binding protein EcfA1 (282 aa).

Positions 9–243 (IEIDNLSFKY…NDELLNIGLD (235 aa)) constitute an ABC transporter domain. An ATP-binding site is contributed by 43–50 (GHNGSGKS).

The protein belongs to the ABC transporter superfamily. Energy-coupling factor EcfA family. In terms of assembly, forms a stable energy-coupling factor (ECF) transporter complex composed of 2 membrane-embedded substrate-binding proteins (S component), 2 ATP-binding proteins (A component) and 2 transmembrane proteins (T component).

The protein resides in the cell membrane. Its function is as follows. ATP-binding (A) component of a common energy-coupling factor (ECF) ABC-transporter complex. Unlike classic ABC transporters this ECF transporter provides the energy necessary to transport a number of different substrates. This chain is Energy-coupling factor transporter ATP-binding protein EcfA1, found in Ligilactobacillus salivarius (strain UCC118) (Lactobacillus salivarius).